The primary structure comprises 130 residues: MRHYEIVFMVHPDQSEQVPGMIERYSATITNAAGTIHRLEDWGRRQLAYPISKLHKAHYVLLNVEAPQEAIDELETNFRFNDAVIRSMVMRVKHAVTEASPMVKAKDERRERHDFASEANDDSEAGDSEE.

Residues 100 to 130 are disordered; it reads SPMVKAKDERRERHDFASEANDDSEAGDSEE. The span at 104-116 shows a compositional bias: basic and acidic residues; it reads KAKDERRERHDFA. The span at 119 to 130 shows a compositional bias: acidic residues; sequence ANDDSEAGDSEE.

It belongs to the bacterial ribosomal protein bS6 family.

In terms of biological role, binds together with bS18 to 16S ribosomal RNA. This is Small ribosomal subunit protein bS6 from Yersinia pestis (strain Pestoides F).